The chain runs to 510 residues: NAD(P)H-quinone oxidoreductase subunit 2 B, chloroplastic (510 aa).

The next 13 membrane-spanning stretches (helical) occupy residues 24–44 (LLLF…GLIL), 57–77 (IPWL…ALLF), 99–119 (IFQF…VEYI), 124–144 (MAIA…MFLC), 149–169 (LITI…LSGY), 183–203 (YLLM…WLYG), 227–247 (PGIS…LSPA), 295–315 (WHLL…LIAI), 323–343 (MLAY…IVGD), 354–374 (YMLF…LFGL), 395–415 (ALSL…AGFF), 418–438 (LHLF…IGLL), and 484–504 (MIVC…IIAI).

The protein belongs to the complex I subunit 2 family. In terms of assembly, NDH is composed of at least 16 different subunits, 5 of which are encoded in the nucleus.

It is found in the plastid. It localises to the chloroplast thylakoid membrane. It catalyses the reaction a plastoquinone + NADH + (n+1) H(+)(in) = a plastoquinol + NAD(+) + n H(+)(out). The enzyme catalyses a plastoquinone + NADPH + (n+1) H(+)(in) = a plastoquinol + NADP(+) + n H(+)(out). Its function is as follows. NDH shuttles electrons from NAD(P)H:plastoquinone, via FMN and iron-sulfur (Fe-S) centers, to quinones in the photosynthetic chain and possibly in a chloroplast respiratory chain. The immediate electron acceptor for the enzyme in this species is believed to be plastoquinone. Couples the redox reaction to proton translocation, and thus conserves the redox energy in a proton gradient. The polypeptide is NAD(P)H-quinone oxidoreductase subunit 2 B, chloroplastic (Gossypium hirsutum (Upland cotton)).